A 741-amino-acid polypeptide reads, in one-letter code: Nuclear poly(A) polymerase 4 (741 aa).

ATP is bound by residues 101–103 (FGS), 113–116 (ADID), 114–116 (DID), Asp169, Lys230, Tyr239, and 248–249 (GV). Mg(2+) contacts are provided by Asp114, Asp116, and Asp169. The Nuclear localization signal motif lies at 485–492 (RRRQLPPF). Disordered stretches follow at residues 494–556 (FPNG…LSPQ) and 683–741 (YEGF…RLLT). A compositionally biased stretch (basic and acidic residues) spans 534 to 551 (KNDSEMMDVRPEKPEKRA). Over residues 701–717 (LYSQSGMSEDLQSNSLV) the composition is skewed to polar residues. Over residues 721–731 (EKSEDRARSES) the composition is skewed to basic and acidic residues. Residues 732–741 (FQKSQIRLLT) show a composition bias toward polar residues.

Belongs to the poly(A) polymerase family. Monomer. Forms a complex with cleavage and polyadenylation specificity factor (CPSF) subunits CFIS2, FIPS3, PAPS1, PABN1, PABN2, PABN3 and FIPS5. It depends on Mg(2+) as a cofactor. The cofactor is Mn(2+). In terms of tissue distribution, mostly expressed in flowers (very active in pollen, sepals, styles, and stigmas), cotyledons and hypocotyls, and, to a lower extent, in roots (confined to the vascular tissue in the radicle) and leaves (in the vascular tissue and leaf petioles). Barely detected in stems. Active in the primary and secondary root systems.

The protein resides in the nucleus. The catalysed reaction is RNA(n) + ATP = RNA(n)-3'-adenine ribonucleotide + diphosphate. In terms of biological role, essential protein. Polymerase that creates the 3'-poly(A) tail of mRNA's. Also required for the endoribonucleolytic cleavage reaction at some polyadenylation sites. May acquire specificity through interaction with a cleavage and polyadenylation specificity factor (CPSF) at its C-terminus. The polypeptide is Nuclear poly(A) polymerase 4 (Arabidopsis thaliana (Mouse-ear cress)).